A 359-amino-acid chain; its full sequence is Transcription factor MYB115 (359 aa).

The segment covering 1-17 (MYHQNLISSTPNQNSNP) has biased composition (polar residues). Residues 1–21 (MYHQNLISSTPNQNSNPHDWD) form a disordered region. 2 consecutive HTH myb-type domains span residues 153–208 (KDII…RPNI) and 209–259 (KKND…RRLH). 2 consecutive DNA-binding regions (H-T-H motif) follow at residues 181 to 204 (WTSI…HNHL) and 232 to 255 (WTEI…NATK).

Accumulates in reproductive organs (e.g. flowers and siliques). Expressed at very low levels in vegetative organs.

The protein localises to the nucleus. In terms of biological role, transcription activator that recognizes the motif 5'-TAACGG-3' in the promoter of target genes. Promotes vegetative-to-embryonic transition and the formation of somatic embryos from root explants in a WUS-independent manner. Together with MYB118, activates the transcription of S-ACP-DES2/AAD2 and S-ACP-DES3/AAD3 thus promoting the biosynthesis of omega-7 monounsaturated fatty acid in seed endosperm. This chain is Transcription factor MYB115, found in Arabidopsis thaliana (Mouse-ear cress).